The sequence spans 381 residues: Succinyl-diaminopimelate desuccinylase (381 aa).

Residue His-70 participates in Zn(2+) binding. Asp-72 is an active-site residue. Asp-103 lines the Zn(2+) pocket. The active-site Proton acceptor is Glu-136. Positions 137, 165, and 354 each coordinate Zn(2+).

Belongs to the peptidase M20A family. DapE subfamily. In terms of assembly, homodimer. Zn(2+) serves as cofactor. The cofactor is Co(2+).

The catalysed reaction is N-succinyl-(2S,6S)-2,6-diaminopimelate + H2O = (2S,6S)-2,6-diaminopimelate + succinate. It functions in the pathway amino-acid biosynthesis; L-lysine biosynthesis via DAP pathway; LL-2,6-diaminopimelate from (S)-tetrahydrodipicolinate (succinylase route): step 3/3. Its function is as follows. Catalyzes the hydrolysis of N-succinyl-L,L-diaminopimelic acid (SDAP), forming succinate and LL-2,6-diaminopimelate (DAP), an intermediate involved in the bacterial biosynthesis of lysine and meso-diaminopimelic acid, an essential component of bacterial cell walls. The sequence is that of Succinyl-diaminopimelate desuccinylase from Roseobacter denitrificans (strain ATCC 33942 / OCh 114) (Erythrobacter sp. (strain OCh 114)).